Reading from the N-terminus, the 551-residue chain is Adenylosuccinate synthetase (551 aa).

GTP is bound by residues 131-137 (GDEGKGK) and 159-161 (GHT). Aspartate 132 (proton acceptor) is an active-site residue. Mg(2+) is bound by residues aspartate 132 and glycine 159. IMP contacts are provided by residues 132-135 (DEGK), 157-160 (NAGH), threonine 248, arginine 262, asparagine 339, threonine 354, and arginine 418. Histidine 160 serves as the catalytic Proton donor. 414–420 (TTTGRAR) is a substrate binding site. GTP is bound by residues arginine 420, 446-448 (KLD), and 528-530 (GVG).

The protein belongs to the adenylosuccinate synthetase family. As to quaternary structure, homodimer. Requires Mg(2+) as cofactor.

The protein localises to the cytoplasm. It catalyses the reaction IMP + L-aspartate + GTP = N(6)-(1,2-dicarboxyethyl)-AMP + GDP + phosphate + 2 H(+). The protein operates within purine metabolism; AMP biosynthesis via de novo pathway; AMP from IMP: step 1/2. Its function is as follows. Plays an important role in the de novo pathway and in the salvage pathway of purine nucleotide biosynthesis. Catalyzes the first committed step in the biosynthesis of AMP from IMP. The polypeptide is Adenylosuccinate synthetase (Phytophthora infestans (strain T30-4) (Potato late blight agent)).